The chain runs to 228 residues: L-ribulose-5-phosphate 4-epimerase UlaF (228 aa).

Residues 26–27, 43–44, and 72–73 contribute to the substrate site; these read GN, SG, and SS. Residues Asp74, His93, and His95 each coordinate Zn(2+). The active-site Proton donor/acceptor is Asp118. Zn(2+) is bound at residue His167. The active-site Proton donor/acceptor is the Tyr225.

It belongs to the aldolase class II family. AraD/FucA subfamily. Zn(2+) serves as cofactor.

The enzyme catalyses L-ribulose 5-phosphate = D-xylulose 5-phosphate. The protein operates within cofactor degradation; L-ascorbate degradation; D-xylulose 5-phosphate from L-ascorbate: step 4/4. Functionally, catalyzes the isomerization of L-ribulose 5-phosphate to D-xylulose 5-phosphate. Is involved in the anaerobic L-ascorbate utilization. This chain is L-ribulose-5-phosphate 4-epimerase UlaF, found in Shigella sonnei (strain Ss046).